We begin with the raw amino-acid sequence, 467 residues long: Tubulin beta-1 chain (467 aa).

GTP-binding residues include Q11, E69, S138, G142, T143, G144, N204, and N226. Position 69 (E69) interacts with Mg(2+). Residues 429-444 are compositionally biased toward acidic residues; sequence TIDDEEGGEEEEGGAE. The disordered stretch occupies residues 429 to 448; that stretch reads TIDDEEGGEEEEGGAEEEAR.

The protein belongs to the tubulin family. Dimer of alpha and beta chains. A typical microtubule is a hollow water-filled tube with an outer diameter of 25 nm and an inner diameter of 15 nM. Alpha-beta heterodimers associate head-to-tail to form protofilaments running lengthwise along the microtubule wall with the beta-tubulin subunit facing the microtubule plus end conferring a structural polarity. Microtubules usually have 13 protofilaments but different protofilament numbers can be found in some organisms and specialized cells. Requires Mg(2+) as cofactor.

The protein resides in the cytoplasm. The protein localises to the cytoskeleton. It is found in the spindle. Its subcellular location is the nucleus. Tubulin is the major constituent of microtubules, a cylinder consisting of laterally associated linear protofilaments composed of alpha- and beta-tubulin heterodimers. Microtubules grow by the addition of GTP-tubulin dimers to the microtubule end, where a stabilizing cap forms. Below the cap, tubulin dimers are in GDP-bound state, owing to GTPase activity of alpha-tubulin. The sequence is that of Tubulin beta-1 chain (BETA) from Physarum polycephalum (Slime mold).